The primary structure comprises 67 residues: Alpha-conotoxin G1.5 (67 aa).

Residues 1-21 form the signal peptide; the sequence is MGMRMMFTVFLLVALATTVVS. The propeptide occupies 22–47; sequence FTSDRASDRRNAAVKAFDLISSTVKK. 2 disulfides stabilise this stretch: cysteine 49–cysteine 55 and cysteine 50–cysteine 63. The residue at position 65 (glutamine 65) is a Glutamine amide.

The protein belongs to the conotoxin A superfamily. In terms of tissue distribution, expressed by the venom duct.

The protein resides in the secreted. In terms of biological role, alpha-conotoxins act on postsynaptic membranes, they bind to the nicotinic acetylcholine receptors (nAChR) and thus inhibit them. Globular isomer (C1-C3; C2-C4) selectively inhibits neuronal (non-muscle) nAChR subtypes particularly human alpha-3-beta-2/CHRNA3-CHRNB2 (IC(50)=35.7 nM) and alpha-9-alpha-10/CHRNA9-CHRNA10 nAChRs (IC(50)=569 nM), while the ribbon isomer (C1-C4; C2-C3) shows weak inhibition on alpha-3-beta-2/CHRNA3-CHRNB2, but not on all other receptors tested. In Conus geographus (Geography cone), this protein is Alpha-conotoxin G1.5.